The sequence spans 612 residues: GPI mannosyltransferase 3 (612 aa).

A run of 2 helical transmembrane segments spans residues 92–112 (LLAI…AGLM) and 145–165 (VIYA…YFTI). Residue Asn-188 is glycosylated (N-linked (GlcNAc...) asparagine). The next 3 membrane-spanning stretches (helical) occupy residues 192–212 (IALL…RTFI), 254–274 (RPSN…NLLL), and 288–308 (ILVV…YFYN). Asn-321 is a glycosylation site (N-linked (GlcNAc...) asparagine). Residues 339–359 (LLQSLPIMLGYSLPLFIYGLF) traverse the membrane as a helical segment. N-linked (GlcNAc...) asparagine glycosylation is present at Asn-361. 3 helical membrane-spanning segments follow: residues 371–391 (FGAL…YSYL), 398–418 (FIYP…LKLA), and 429–449 (EYVW…TTFQ). 3 N-linked (GlcNAc...) asparagine glycosylation sites follow: Asn-508, Asn-526, and Asn-550.

This sequence belongs to the glycosyltransferase 22 family. PIGB subfamily.

Its subcellular location is the endoplasmic reticulum membrane. Its pathway is glycolipid biosynthesis; glycosylphosphatidylinositol-anchor biosynthesis. Mannosyltransferase involved in glycosylphosphatidylinositol-anchor biosynthesis. Transfers the third mannose to Man2-GlcN-acyl-PI during GPI precursor assembly. This Candida glabrata (strain ATCC 2001 / BCRC 20586 / JCM 3761 / NBRC 0622 / NRRL Y-65 / CBS 138) (Yeast) protein is GPI mannosyltransferase 3 (GPI10).